We begin with the raw amino-acid sequence, 21 residues long: 20 kDa chaperonin, chloroplastic (21 aa).

Belongs to the GroES chaperonin family. As to quaternary structure, forms stable complexes with CPN60 in the presence of ATP.

It localises to the plastid. The protein resides in the chloroplast. Its function is as follows. Seems to function only as a co-chaperone, along with cpn60, and in certain cases is essential for the discharge of biologically active proteins from cpn60. This chain is 20 kDa chaperonin, chloroplastic (CPN21), found in Pisum sativum (Garden pea).